Here is a 72-residue protein sequence, read N- to C-terminus: SRY-related protein ADW2 (72 aa).

Positions 1-69 form a DNA-binding region, HMG box; it reads VKRPMNAFMV…KHMADYADYK (69 aa).

It is found in the nucleus. The chain is SRY-related protein ADW2 from Alligator mississippiensis (American alligator).